The primary structure comprises 272 residues: Small ribosomal subunit protein mS23 (272 aa).

The segment at 236–272 (AGATGGAKEESDPAILPELEVAESTSESAQPAEIRTG) is disordered.

The protein belongs to the mitochondrion-specific ribosomal protein mS23 family. In terms of assembly, component of the mitochondrial small ribosomal subunit.

It localises to the mitochondrion. This chain is Small ribosomal subunit protein mS23 (RSM25), found in Coccidioides immitis (strain RS) (Valley fever fungus).